The following is a 136-amino-acid chain: Immunoglobulin J chain (136 aa).

Cystine bridges form between C12–C100, C71–C91, and C108–C133. N-linked (GlcNAc...) (complex) asparagine glycosylation occurs at N48.

As to quaternary structure, part of the secretory IgA (sIgA) complex that consists of two, four or five IgA monomers, and two additional non-Ig polypeptides, namely the JCHAIN and the secretory component (the proteolytic product of PIGR). Part of the secretory IgM (sIgM) complex that consist of five IgM monomers, and two additional non-Ig polypeptides, namely the JCHAIN and the secretory component (the proteolytic product of PIGR). JCHAIN-containing IgM interacts (via CH4 domain) with FCRM (via Ig-like domain).

It localises to the secreted. Its function is as follows. Serves to link two monomer units of either IgM or IgA. In the case of IgM, the J chain-joined dimer is a nucleating unit for the IgM pentamer, and in the case of IgA it induces dimers and/or larger polymers. It also helps to bind these immunoglobulins to secretory component. This chain is Immunoglobulin J chain, found in Oryctolagus cuniculus (Rabbit).